A 233-amino-acid chain; its full sequence is Chromosome partition protein MukE (233 aa).

The segment at 207–233 (SLSLHDESDDADVTMGNAADSVEDEQE) is disordered.

Belongs to the MukE family. Interacts, and probably forms a ternary complex, with MukF and MukB. The complex formation is stimulated by calcium or magnesium.

It localises to the cytoplasm. It is found in the nucleoid. In terms of biological role, involved in chromosome condensation, segregation and cell cycle progression. May participate in facilitating chromosome segregation by condensation DNA from both sides of a centrally located replisome during cell division. Probably acts via its interaction with MukB and MukF. The protein is Chromosome partition protein MukE of Yersinia pestis.